Here is a 258-residue protein sequence, read N- to C-terminus: 2-oxo-tetronate isomerase (258 aa).

Residue Glu143 is the Proton donor/acceptor of the active site. 4 residues coordinate Mg(2+): Glu143, Asp178, Gln204, and Glu240. The active-site Proton donor/acceptor is Glu240.

The protein belongs to the hyi family. OtnI subfamily.

It catalyses the reaction 2-dehydro-L-erythronate = 3-dehydro-L-erythronate. It carries out the reaction 2-dehydro-D-erythronate = 3-dehydro-D-erythronate. Functionally, catalyzes the isomerization of 2-oxo-tetronate to 3-oxo-tetronate. The sequence is that of 2-oxo-tetronate isomerase from Haemophilus influenzae (strain ATCC 51907 / DSM 11121 / KW20 / Rd).